An 87-amino-acid polypeptide reads, in one-letter code: LYR motif-containing protein 2 (87 aa).

The transit peptide at 1–19 directs the protein to the mitochondrion; it reads MGSRLPPAALTLKQFLVRQ.

The protein belongs to the complex I LYR family.

Its subcellular location is the mitochondrion. In terms of biological role, involved in efficient integration of the N-module into mitochondrial respiratory chain complex I. The sequence is that of LYR motif-containing protein 2 (lyrm2) from Xenopus tropicalis (Western clawed frog).